The chain runs to 316 residues: ATP synthase gamma chain (316 aa).

This sequence belongs to the ATPase gamma chain family. In terms of assembly, F-type ATPases have 2 components, CF(1) - the catalytic core - and CF(0) - the membrane proton channel. CF(1) has five subunits: alpha(3), beta(3), gamma(1), delta(1), epsilon(1). CF(0) has three main subunits: a, b and c.

It is found in the cellular thylakoid membrane. Its function is as follows. Produces ATP from ADP in the presence of a proton gradient across the membrane. The gamma chain is believed to be important in regulating ATPase activity and the flow of protons through the CF(0) complex. In Prochlorococcus marinus (strain MIT 9312), this protein is ATP synthase gamma chain.